The primary structure comprises 301 residues: tRNA dimethylallyltransferase (301 aa).

Position 2-9 (Gly-2–Thr-9) interacts with ATP. Thr-4–Thr-9 lines the substrate pocket. Interaction with substrate tRNA regions lie at residues Asp-27–Met-30 and Gln-151–Arg-155.

The protein belongs to the IPP transferase family. Monomer. Mg(2+) serves as cofactor.

It carries out the reaction adenosine(37) in tRNA + dimethylallyl diphosphate = N(6)-dimethylallyladenosine(37) in tRNA + diphosphate. Its function is as follows. Catalyzes the transfer of a dimethylallyl group onto the adenine at position 37 in tRNAs that read codons beginning with uridine, leading to the formation of N6-(dimethylallyl)adenosine (i(6)A). The sequence is that of tRNA dimethylallyltransferase from Coxiella burnetii (strain CbuK_Q154) (Coxiella burnetii (strain Q154)).